The chain runs to 141 residues: Large ribosomal subunit protein uL11 (141 aa).

Belongs to the universal ribosomal protein uL11 family. In terms of assembly, part of the ribosomal stalk of the 50S ribosomal subunit. Interacts with L10 and the large rRNA to form the base of the stalk. L10 forms an elongated spine to which L12 dimers bind in a sequential fashion forming a multimeric L10(L12)X complex. Post-translationally, one or more lysine residues are methylated.

Functionally, forms part of the ribosomal stalk which helps the ribosome interact with GTP-bound translation factors. This Synechococcus sp. (strain CC9902) protein is Large ribosomal subunit protein uL11.